The sequence spans 43 residues: Protein PsbN (43 aa).

The helical transmembrane segment at 5–27 threads the bilayer; sequence TFLSIFISAALLGITGYSIYTAF.

Belongs to the PsbN family.

The protein resides in the plastid. Its subcellular location is the cyanelle thylakoid membrane. May play a role in photosystem I and II biogenesis. The sequence is that of Protein PsbN from Cyanophora paradoxa.